The sequence spans 252 residues: MTATTQPFVYRYPGLIPGILRKRYKRFLADIELASGEIVTAHCPNTGPMTGICELGAPVMLSKSDNPKRKLAYTWEMIQLPTPEPTWIGVNTALPNRVIKAMLLAKQIPELADHYDTVRPEVRYGTENKSRIDFLLTGEGRSPLYVEVKNTTWTKGKLALFPDTETTRGQKHLQELIDIVPAAKAVMLYFINRGDCTRFAPGDSKDPKYGELFRQAIAAGIQILPCRFAVSPEGICYLGLAPWESTEISGVG.

The protein belongs to the SfsA family.

The polypeptide is Sugar fermentation stimulation protein homolog (Picosynechococcus sp. (strain ATCC 27264 / PCC 7002 / PR-6) (Agmenellum quadruplicatum)).